A 515-amino-acid polypeptide reads, in one-letter code: Zinc metalloproteinase-disintegrin-like EoMP06 (515 aa).

Positions 1 to 94 are excised as a propeptide; the sequence is VEDHCYYHGR…TLGLIVPPHG (94 aa). The residue at position 95 (Gln95) is a Pyrrolidone carboxylic acid. Positions 100 to 296 constitute a Peptidase M12B domain; it reads KFIELIIVVD…YNPKCIVDPP (197 aa). Position 103 (Glu103) interacts with Ca(2+). Asn160 carries N-linked (GlcNAc...) asparagine glycosylation. Asp187 contributes to the Ca(2+) binding site. Residues Asn194 and Asn225 are each glycosylated (N-linked (GlcNAc...) asparagine). 3 disulfide bridges follow: Cys211–Cys291, Cys251–Cys275, and Cys253–Cys258. Zn(2+) is bound at residue His236. Glu237 is a catalytic residue. Residues His240 and His246 each contribute to the Zn(2+) site. Residues Cys291, Val306, Asn309, Val311, Glu313, Glu316, and Asp319 each coordinate Ca(2+). The 87-residue stretch at 304-390 folds into the Disintegrin domain; the sequence is PAVCGNGVWE…ECPRNEFQRN (87 aa). 14 disulfides stabilise this stretch: Cys307/Cys336, Cys318/Cys331, Cys320/Cys326, Cys330/Cys353, Cys344/Cys350, Cys349/Cys375, Cys362/Cys382, Cys369/Cys401, Cys394/Cys406, Cys413/Cys466, Cys428/Cys477, Cys441/Cys454, Cys461/Cys503, and Cys497/Cys508. The D/ECD-tripeptide motif lies at 368 to 370; sequence DCD. 3 residues coordinate Ca(2+): Asp370, Val371, and Asn385.

Belongs to the venom metalloproteinase (M12B) family. P-III subfamily. P-IIIa sub-subfamily. Monomer. It depends on Zn(2+) as a cofactor. As to expression, expressed by the venom gland.

The protein localises to the secreted. Its function is as follows. Snake venom zinc metalloproteinase that catalyzes the conversion of prothrombin (F2) to alpha-thrombin through formation of a thrombin intermediate, thereby functioning as a procoagulant protein. In Echis ocellatus (Ocellated saw-scaled viper), this protein is Zinc metalloproteinase-disintegrin-like EoMP06.